Reading from the N-terminus, the 311-residue chain is Ribonuclease HIII (311 aa).

The 217-residue stretch at 95–311 folds into the RNase H type-2 domain; it reads MSIVGSDEVG…NTEKAFRLLK (217 aa). Positions 101, 102, and 206 each coordinate a divalent metal cation.

The protein belongs to the RNase HII family. RnhC subfamily. Mn(2+) serves as cofactor. Requires Mg(2+) as cofactor.

The protein localises to the cytoplasm. It carries out the reaction Endonucleolytic cleavage to 5'-phosphomonoester.. In terms of biological role, endonuclease that specifically degrades the RNA of RNA-DNA hybrids. The protein is Ribonuclease HIII of Bacillus thuringiensis subsp. konkukian (strain 97-27).